Reading from the N-terminus, the 221-residue chain is Keratin-associated protein 10-3 (221 aa).

A run of 18 repeats spans residues 26-30 (CCEPP), 31-35 (CCATS), 36-40 (CCAPA), 57-61 (CCQAA), 79-83 (CCQQS), 89-93 (CCTSS), 99-103 (CCVPV), 104-108 (CCKPV), 109-113 (CCVPV), 114-118 (CCKPV), 119-123 (CCKPI), 124-128 (CCVPV), 136-140 (CCQQS), 146-150 (CCTTS), 151-155 (CCRPS), 177-181 (CCAPA), 188-192 (CCRPA), and 210-214 (CCGLS). Positions 26-214 (CCEPPCCATS…RLSSACCGLS (189 aa)) are 18 X 5 AA repeats of C-C-X(3).

Belongs to the KRTAP type 10 family. Interacts with hair keratins. In terms of tissue distribution, restricted to a narrow region of the hair fiber cuticle, lying approximately 20 cell layers above the apex of the dermal papilla of the hair root; not detected in any other tissues.

In terms of biological role, in the hair cortex, hair keratin intermediate filaments are embedded in an interfilamentous matrix, consisting of hair keratin-associated proteins (KRTAP), which are essential for the formation of a rigid and resistant hair shaft through their extensive disulfide bond cross-linking with abundant cysteine residues of hair keratins. The matrix proteins include the high-sulfur and high-glycine-tyrosine keratins. This Homo sapiens (Human) protein is Keratin-associated protein 10-3 (KRTAP10-3).